The following is a 498-amino-acid chain: Protein MGF 505-5R (498 aa).

This sequence belongs to the asfivirus MGF 505 family.

Its function is as follows. Plays a role in virus cell tropism, and may be required for efficient virus replication in macrophages. This chain is Protein MGF 505-5R, found in Ornithodoros (relapsing fever ticks).